The following is a 498-amino-acid chain: ATP synthase subunit beta, chloroplastic (498 aa).

At Thr6 the chain carries Phosphothreonine. A Phosphoserine modification is found at Ser13. ATP is bound at residue Gly172–Thr179.

This sequence belongs to the ATPase alpha/beta chains family. As to quaternary structure, F-type ATPases have 2 components, CF(1) - the catalytic core - and CF(0) - the membrane proton channel. CF(1) has five subunits: alpha(3), beta(3), gamma(1), delta(1), epsilon(1). CF(0) has four main subunits: a(1), b(1), b'(1) and c(9-12).

It localises to the plastid. It is found in the chloroplast thylakoid membrane. It catalyses the reaction ATP + H2O + 4 H(+)(in) = ADP + phosphate + 5 H(+)(out). Functionally, produces ATP from ADP in the presence of a proton gradient across the membrane. The catalytic sites are hosted primarily by the beta subunits. In Nasturtium officinale (Watercress), this protein is ATP synthase subunit beta, chloroplastic.